The chain runs to 297 residues: Carbamate kinase (297 aa).

The protein belongs to the carbamate kinase family.

The protein resides in the cytoplasm. The catalysed reaction is hydrogencarbonate + NH4(+) + ATP = carbamoyl phosphate + ADP + H2O + H(+). It catalyses the reaction carbamate + ATP = carbamoyl phosphate + ADP. The enzyme catalyses hydrogencarbonate + NH4(+) = carbamate + H2O + H(+). Its pathway is nitrogen metabolism; (S)-allantoin degradation. Kinase involved in the anaerobic nitrogen utilization via the assimilation of allantoin. Catalyzes the transfer of a phosphate group from carbamoyl phosphate to ADP to produce ATP and leave carbamate, which spontaneously hydrolyzes to ammonia and hydrogencarbonate. The protein is Carbamate kinase of Escherichia coli O157:H7.